Reading from the N-terminus, the 260-residue chain is Putative [LysW]-aminoadipate/[LysW]-glutamate kinase (260 aa).

Residues 35–36 (GG), Arg-62, and Asn-162 each bind substrate.

This sequence belongs to the acetylglutamate kinase family. LysZ subfamily.

Its subcellular location is the cytoplasm. The catalysed reaction is [amino-group carrier protein]-C-terminal-N-(1,4-dicarboxybutan-1-yl)-L-glutamine + ATP = [amino-group carrier protein]-C-terminal-N-(1-carboxy-5-phosphooxy-5-oxopentan-1-yl)-L-glutamine + ADP. It catalyses the reaction [amino-group carrier protein]-C-terminal-gamma-(L-glutamyl)-L-glutamate + ATP = [amino-group carrier protein]-C-terminal-gamma-(5-phospho-L-glutamyl)-L-glutamate + ADP. The protein operates within amino-acid biosynthesis; L-lysine biosynthesis via AAA pathway; L-lysine from L-alpha-aminoadipate (Thermus route): step 2/5. Its pathway is amino-acid biosynthesis; L-arginine biosynthesis. In terms of biological role, involved in both the arginine and lysine biosynthetic pathways. Phosphorylates the LysW-bound precursors glutamate (for arginine biosynthesis), respectively alpha-aminoadipate (for lysine biosynthesis). This chain is Putative [LysW]-aminoadipate/[LysW]-glutamate kinase, found in Pyrobaculum neutrophilum (strain DSM 2338 / JCM 9278 / NBRC 100436 / V24Sta) (Thermoproteus neutrophilus).